Reading from the N-terminus, the 99-residue chain is MDMFADNVVTLVDEEGREISFEMLDRVNYNGNDYIVLLPLEEMEKEDEEAEVVILRIEDRDGEEVYVGVEDEEELENVFEIFQSRFDDEDFDMYDDDEE.

The protein belongs to the UPF0473 family.

This is UPF0473 protein Athe_1150 from Caldicellulosiruptor bescii (strain ATCC BAA-1888 / DSM 6725 / KCTC 15123 / Z-1320) (Anaerocellum thermophilum).